Consider the following 514-residue polypeptide: Cytidine and dCMP deaminase domain-containing protein 1 (514 aa).

Polar residues-rich tracts occupy residues 1–11 (MKEAGQMQNLE) and 18–27 (SVSTQTGSMT). 2 disordered regions span residues 1-27 (MKEAGQMQNLESARAGRSVSTQTGSMT) and 55-83 (RQKSQKNEEGKHGPLGDNEERTRVSTDKR). Positions 59 to 83 (QKNEEGKHGPLGDNEERTRVSTDKR) are enriched in basic and acidic residues. The CMP/dCMP-type deaminase 1 domain occupies 70-168 (GDNEERTRVS…SLLTEASSSE (99 aa)). Zn(2+) is bound by residues H109, C134, and C137. The Nuclear export signal signature appears at 271-283 (NLRQNMKDLILLL). The CMP/dCMP-type deaminase 2 domain maps to 317–482 (EIARHCMVQA…LNPSGAYGLE (166 aa)). Position 398 (H398) interacts with Zn(2+). The active-site Proton donor is the E400. Zn(2+) is bound by residues C426 and C429. The segment at 480–514 (GLEQNEPERRENGVLRPVPQKEEQHQDKKLRLGIH) is disordered. The span at 485 to 514 (EPERRENGVLRPVPQKEEQHQDKKLRLGIH) shows a compositional bias: basic and acidic residues. A Bipartite nuclear localization signal motif is present at residues 488–510 (RRENGVLRPVPQKEEQHQDKKLR).

The protein belongs to the cytidine and deoxycytidylate deaminase family. Zn(2+) serves as cofactor. Widely expressed. Expressed at high levels in the testis.

The protein resides in the cytoplasm. Its subcellular location is the nucleus. It carries out the reaction 2'-deoxycytidine + H2O + H(+) = 2'-deoxyuridine + NH4(+). The catalysed reaction is cytidine + H2O + H(+) = uridine + NH4(+). In terms of biological role, catalyzes the deamination of cytidine and deoxycytidine into uridine and deoxyuridine, respectively. May play an important role in testicular development and spermatogenesis. This Homo sapiens (Human) protein is Cytidine and dCMP deaminase domain-containing protein 1 (CDADC1).